A 117-amino-acid polypeptide reads, in one-letter code: Cell cycle protein GpsB (117 aa).

Residues 32–70 (LDNVIKDYDAFVKENQRLQDENERLLAKVDELTRQVQVG) are a coiled coil.

It belongs to the GpsB family. Forms polymers through the coiled coil domains. Interacts with PBP1, MreC and EzrA.

It is found in the cytoplasm. Functionally, divisome component that associates with the complex late in its assembly, after the Z-ring is formed, and is dependent on DivIC and PBP2B for its recruitment to the divisome. Together with EzrA, is a key component of the system that regulates PBP1 localization during cell cycle progression. Its main role could be the removal of PBP1 from the cell pole after pole maturation is completed. Also contributes to the recruitment of PBP1 to the division complex. Not essential for septum formation. The polypeptide is Cell cycle protein GpsB (Levilactobacillus brevis (strain ATCC 367 / BCRC 12310 / CIP 105137 / JCM 1170 / LMG 11437 / NCIMB 947 / NCTC 947) (Lactobacillus brevis)).